The sequence spans 172 residues: 3-hydroxydecanoyl-[acyl-carrier-protein] dehydratase (172 aa).

His71 is an active-site residue.

This sequence belongs to the thioester dehydratase family. FabA subfamily. In terms of assembly, homodimer.

The protein localises to the cytoplasm. It catalyses the reaction a (3R)-hydroxyacyl-[ACP] = a (2E)-enoyl-[ACP] + H2O. It carries out the reaction (3R)-hydroxydecanoyl-[ACP] = (2E)-decenoyl-[ACP] + H2O. The catalysed reaction is (2E)-decenoyl-[ACP] = (3Z)-decenoyl-[ACP]. It participates in lipid metabolism; fatty acid biosynthesis. In terms of biological role, necessary for the introduction of cis unsaturation into fatty acids. Catalyzes the dehydration of (3R)-3-hydroxydecanoyl-ACP to E-(2)-decenoyl-ACP and then its isomerization to Z-(3)-decenoyl-ACP. Can catalyze the dehydratase reaction for beta-hydroxyacyl-ACPs with saturated chain lengths up to 16:0, being most active on intermediate chain length. This is 3-hydroxydecanoyl-[acyl-carrier-protein] dehydratase from Escherichia coli (strain SE11).